The sequence spans 443 residues: Carboxypeptidase M (443 aa).

The N-terminal stretch at 1-17 is a signal peptide; it reads MDRARLWLGLLLPVVAA. One can recognise a Peptidase M14 domain in the interval 21–311; the sequence is RYHHQEGMEA…ASLIEYIKQV (291 aa). An N-linked (GlcNAc...) asparagine glycan is attached at Asn38. The Zn(2+) site is built by His83 and Glu86. Cystine bridges form between Cys138-Cys285, Cys242-Cys284, and Cys341-Cys410. An N-linked (GlcNAc...) asparagine glycan is attached at Asn164. Zn(2+) is bound at residue His190. Glu281 (proton donor/acceptor) is an active-site residue. An N-linked (GlcNAc...) asparagine glycan is attached at Asn363. Ser423 carries the GPI-anchor amidated serine lipid modification. The propeptide at 424 to 443 is removed in mature form; the sequence is AATKPSLGVFFMTLLYVFFK.

Belongs to the peptidase M14 family. It depends on Zn(2+) as a cofactor.

Its subcellular location is the cell membrane. It carries out the reaction Cleavage of C-terminal arginine or lysine residues from polypeptides.. Its function is as follows. Specifically removes C-terminal basic residues (Arg or Lys) from peptides and proteins. It is believed to play important roles in the control of peptide hormone and growth factor activity at the cell surface, and in the membrane-localized degradation of extracellular proteins. The sequence is that of Carboxypeptidase M (Cpm) from Mus musculus (Mouse).